A 475-amino-acid chain; its full sequence is Ammonium transporter Rh type C (475 aa).

Over 1 to 20 (MGCVQSFRNFCDRPKNTNVR) the chain is Cytoplasmic. Residues 21–41 (ISLPAVCFVWQIAMIILFGVF) form a helical membrane-spanning segment. At 42–73 (IRYNEEADTHWVEYRKKENISSDIENDFYFRY) the chain is on the extracellular side. The N-linked (GlcNAc...) asparagine glycan is linked to Asn-60. A helical transmembrane segment spans residues 74–94 (PSFQDVHVMIFVGFGFLMTFL). The Cytoplasmic portion of the chain corresponds to 95 to 98 (KRYS). The chain crosses the membrane as a helical span at residues 99-119 (FGAVGFNFLIAAFGLQWALLM). Over 120 to 138 (QGWFHSLDYTDGKIKIGIE) the chain is Extracellular. The helical transmembrane segment at 139–159 (NLINADFCVAGCLIAYGAVLG) threads the bilayer. The Cytoplasmic segment spans residues 160-167 (KVSPVQLM). Residues 168–188 (VLTLFGITLFAVEEYIILNLI) form a helical membrane-spanning segment. The Extracellular segment spans residues 189-193 (HARDA). Residues 194–214 (GGSMVIHTFGGYYGLSISWML) traverse the membrane as a helical segment. Over 215–233 (YRPNLEQSSNLQGSVYQSD) the chain is Cytoplasmic. Residues 234–254 (VFAMIGTLFLWMFWPSFNSAI) traverse the membrane as a helical segment. Residues 255–265 (TDHGDGQHRAA) lie on the Extracellular side of the membrane. A helical membrane pass occupies residues 266-286 (INTYLALASTVLTTVAISSLF). The Cytoplasmic segment spans residues 287–299 (QKHGKLDMVHIQN). Residues 300-320 (STLAGGVAVGTAAEFMLMPYG) form a helical membrane-spanning segment. Residue Ser-321 is a topological domain, extracellular. A helical transmembrane segment spans residues 322 to 342 (LIVGFCCGIISTLGYIYLTPF). Over 343–357 (MEKYLKIQDTCGIHN) the chain is Cytoplasmic. A helical membrane pass occupies residues 358 to 378 (LHAMPGLIGGIVGAITAAAAT). Topologically, residues 379-410 (ESVYGKEGLVNTFDFVGPFKNMVPTTQGGHQA) are extracellular. The chain crosses the membrane as a helical span at residues 411-431 (AGLCVAICFGIGGGIMVGCIL). Over 432–475 (RLPIWCDPADDNCFNDEPYWELPEEEEIIPPILHYNNHMVNKDV) the chain is Cytoplasmic.

Belongs to the ammonium transporter (TC 2.A.49) family. Rh subfamily. In terms of assembly, homotrimer.

It is found in the apical cell membrane. In terms of biological role, functions as an ammonia transporter. May play a role in the elimination of ammonia in the gill. This Tetraodon nigroviridis (Spotted green pufferfish) protein is Ammonium transporter Rh type C (rhcg).